Consider the following 465-residue polypeptide: UDP-N-acetylmuramoylalanine--D-glutamate ligase (465 aa).

127–133 (GSNGKST) is an ATP binding site.

This sequence belongs to the MurCDEF family.

It is found in the cytoplasm. It carries out the reaction UDP-N-acetyl-alpha-D-muramoyl-L-alanine + D-glutamate + ATP = UDP-N-acetyl-alpha-D-muramoyl-L-alanyl-D-glutamate + ADP + phosphate + H(+). Its pathway is cell wall biogenesis; peptidoglycan biosynthesis. Cell wall formation. Catalyzes the addition of glutamate to the nucleotide precursor UDP-N-acetylmuramoyl-L-alanine (UMA). The chain is UDP-N-acetylmuramoylalanine--D-glutamate ligase from Cereibacter sphaeroides (strain ATCC 17023 / DSM 158 / JCM 6121 / CCUG 31486 / LMG 2827 / NBRC 12203 / NCIMB 8253 / ATH 2.4.1.) (Rhodobacter sphaeroides).